The chain runs to 290 residues: Fructose-bisphosphate aldolase (290 aa).

Ser51 is a D-glyceraldehyde 3-phosphate binding site. Catalysis depends on Asp86, which acts as the Proton donor. The Zn(2+) site is built by His87, Asp107, Glu137, and His179. Gly180 lines the dihydroxyacetone phosphate pocket. His208 is a binding site for Zn(2+). Residues 209–211 (GGS) and 230–233 (NINT) each bind dihydroxyacetone phosphate.

This sequence belongs to the class II fructose-bisphosphate aldolase family. Homodimer. It depends on Zn(2+) as a cofactor.

The enzyme catalyses beta-D-fructose 1,6-bisphosphate = D-glyceraldehyde 3-phosphate + dihydroxyacetone phosphate. It participates in carbohydrate degradation; glycolysis; D-glyceraldehyde 3-phosphate and glycerone phosphate from D-glucose: step 4/4. In terms of biological role, catalyzes the aldol condensation of dihydroxyacetone phosphate (DHAP or glycerone-phosphate) with glyceraldehyde 3-phosphate (G3P) to form fructose 1,6-bisphosphate (FBP) in gluconeogenesis and the reverse reaction in glycolysis. The protein is Fructose-bisphosphate aldolase (fba) of Ureaplasma parvum serovar 3 (strain ATCC 700970).